A 75-amino-acid polypeptide reads, in one-letter code: Insecticidal toxin OcyC10 (75 aa).

The signal sequence occupies residues 1 to 19 (MNFATKIVILLLVAALILA). Intrachain disulfides connect Cys50/Cys62 and Cys56/Cys68.

Expressed by the venom gland.

It is found in the secreted. Functionally, insecticidal toxin. This chain is Insecticidal toxin OcyC10, found in Opisthacanthus cayaporum (South American scorpion).